A 673-amino-acid polypeptide reads, in one-letter code: DNA ligase (673 aa).

NAD(+) is bound by residues 36 to 40 (DSEYD), 85 to 86 (SL), and glutamate 118. Lysine 120 (N6-AMP-lysine intermediate) is an active-site residue. NAD(+) is bound by residues arginine 141, glutamate 178, lysine 295, and lysine 319. Zn(2+) is bound by residues cysteine 413, cysteine 416, cysteine 431, and cysteine 437. The region spanning 596–673 (VRDNPLKGKT…SENEFLALLA (78 aa)) is the BRCT domain.

This sequence belongs to the NAD-dependent DNA ligase family. LigA subfamily. It depends on Mg(2+) as a cofactor. Mn(2+) is required as a cofactor.

The enzyme catalyses NAD(+) + (deoxyribonucleotide)n-3'-hydroxyl + 5'-phospho-(deoxyribonucleotide)m = (deoxyribonucleotide)n+m + AMP + beta-nicotinamide D-nucleotide.. In terms of biological role, DNA ligase that catalyzes the formation of phosphodiester linkages between 5'-phosphoryl and 3'-hydroxyl groups in double-stranded DNA using NAD as a coenzyme and as the energy source for the reaction. It is essential for DNA replication and repair of damaged DNA. In Histophilus somni (strain 129Pt) (Haemophilus somnus), this protein is DNA ligase.